Here is a 434-residue protein sequence, read N- to C-terminus: Putative nuclease OPG089 (434 aa).

Residues Asp-33, Asp-74, Glu-168, Asp-170, Asp-196, and Asp-198 each coordinate Mg(2+).

This sequence belongs to the XPG/RAD2 endonuclease family. FEN1 subfamily. It depends on Mg(2+) as a cofactor.

The protein resides in the virion. Functionally, putative nuclease that seems to be required for double-strand break repair, homologous recombination, and production of full-length viral genomic DNA. In Vaccinia virus (strain Western Reserve) (VACV), this protein is Putative nuclease OPG089 (OPG089).